We begin with the raw amino-acid sequence, 768 residues long: Phosphoribosylformylglycinamidine synthase subunit PurL (768 aa).

The active site involves H46. ATP is bound by residues Y49 and K88. Position 90 (E90) interacts with Mg(2+). Residues 91–94 and R113 each bind substrate; that span reads SHNH. H92 serves as the catalytic Proton acceptor. Residue D114 coordinates Mg(2+). Q237 serves as a coordination point for substrate. D265 contributes to the Mg(2+) binding site. 309–311 contributes to the substrate binding site; that stretch reads ESQ. ATP-binding residues include D514 and G551. Mg(2+) is bound at residue N552. S554 lines the substrate pocket.

The protein belongs to the FGAMS family. Monomer. Part of the FGAM synthase complex composed of 1 PurL, 1 PurQ and 2 PurS subunits.

It localises to the cytoplasm. It carries out the reaction N(2)-formyl-N(1)-(5-phospho-beta-D-ribosyl)glycinamide + L-glutamine + ATP + H2O = 2-formamido-N(1)-(5-O-phospho-beta-D-ribosyl)acetamidine + L-glutamate + ADP + phosphate + H(+). It participates in purine metabolism; IMP biosynthesis via de novo pathway; 5-amino-1-(5-phospho-D-ribosyl)imidazole from N(2)-formyl-N(1)-(5-phospho-D-ribosyl)glycinamide: step 1/2. Its function is as follows. Part of the phosphoribosylformylglycinamidine synthase complex involved in the purines biosynthetic pathway. Catalyzes the ATP-dependent conversion of formylglycinamide ribonucleotide (FGAR) and glutamine to yield formylglycinamidine ribonucleotide (FGAM) and glutamate. The FGAM synthase complex is composed of three subunits. PurQ produces an ammonia molecule by converting glutamine to glutamate. PurL transfers the ammonia molecule to FGAR to form FGAM in an ATP-dependent manner. PurS interacts with PurQ and PurL and is thought to assist in the transfer of the ammonia molecule from PurQ to PurL. This chain is Phosphoribosylformylglycinamidine synthase subunit PurL, found in Synechocystis sp. (strain ATCC 27184 / PCC 6803 / Kazusa).